The following is a 657-amino-acid chain: 1-deoxy-D-xylulose-5-phosphate synthase (657 aa).

Thiamine diphosphate is bound at residue histidine 73. The disordered stretch occupies residues 91–110 (RQEGGMSGYPDRGESEHDIV). Basic and acidic residues predominate over residues 101 to 110 (DRGESEHDIV). 113–115 (SHA) lines the thiamine diphosphate pocket. Aspartate 145 lines the Mg(2+) pocket. Thiamine diphosphate-binding positions include 146-147 (GA), asparagine 175, tyrosine 293, and glutamate 375. Asparagine 175 is a Mg(2+) binding site.

Belongs to the transketolase family. DXPS subfamily. Homodimer. It depends on Mg(2+) as a cofactor. Thiamine diphosphate is required as a cofactor.

It carries out the reaction D-glyceraldehyde 3-phosphate + pyruvate + H(+) = 1-deoxy-D-xylulose 5-phosphate + CO2. It functions in the pathway metabolic intermediate biosynthesis; 1-deoxy-D-xylulose 5-phosphate biosynthesis; 1-deoxy-D-xylulose 5-phosphate from D-glyceraldehyde 3-phosphate and pyruvate: step 1/1. Its function is as follows. Catalyzes the acyloin condensation reaction between C atoms 2 and 3 of pyruvate and glyceraldehyde 3-phosphate to yield 1-deoxy-D-xylulose-5-phosphate (DXP). The chain is 1-deoxy-D-xylulose-5-phosphate synthase from Arthrobacter sp. (strain FB24).